We begin with the raw amino-acid sequence, 85 residues long: U4-theraphotoxin-Hhn1a (85 aa).

A signal peptide spans 1-22; the sequence is MKMTLIAILTCAAVLVLHTTAA. The propeptide occupies 23-48; the sequence is EELEAESQLMEVGMPDTELEAVDEER. Cystine bridges form between cysteine 52–cysteine 66, cysteine 56–cysteine 77, and cysteine 71–cysteine 82.

It belongs to the neurotoxin 12 (Hwtx-2) family. 02 (Hwtx-2) subfamily. In terms of assembly, monomer. As to expression, expressed by the venom gland.

The protein resides in the secreted. Its function is as follows. Neurotoxin active on both insects and mammals. The chain is U4-theraphotoxin-Hhn1a from Cyriopagopus hainanus (Chinese bird spider).